The following is a 580-amino-acid chain: YTH domain-containing family protein 2 (580 aa).

Positions 1–45 are disordered; it reads MSASSLLEQRPKGQGNKVQNGSVHQKDGLNDDDFEPYLSPQARPN. N-acetylserine is present on Ser-2. Residues Ser-2, Ser-4, Ser-5, Ser-22, Ser-39, and Ser-196 each carry the phosphoserine modification. Residues 2-385 form a localization to mRNA processing bodies (P-bodies) region; it reads SASSLLEQRP…QAGSGSTPSE (384 aa). The segment at 247–388 is disordered; sequence AKQQPKLKTK…SGSTPSEPHP (142 aa). Residues 291 to 317 show a composition bias toward polar residues; that stretch reads ALVQNIGQQPTQGSPQPVGQQANNSPP. The segment covering 338–350 has biased composition (low complexity); it reads AQLSVQQQAAQPT. Ser-360 carries the phosphoserine modification. Residues 360–372 show a composition bias toward gly residues; it reads SGFGHNGVDGNGV. Residues 373–384 are compositionally biased toward polar residues; it reads GQTQAGSGSTPS. Residues 386–580 form an interaction with m6A-containing mRNAs region; the sequence is PHPVLEKLRS…VKKERQGRGK (195 aa). A Phosphoserine modification is found at Ser-395. Residues 411–545 enclose the YTH domain; that stretch reads GRVFIIKSYS…EKAKQVLKII (135 aa). Residues 417-419, Asp-423, 433-434, Asn-463, Trp-487, and Trp-492 contribute to the RNA site; these read KSY and WC.

This sequence belongs to the YTHDF family. YTHDF2 subfamily. In terms of assembly, interacts with CNOT1; interaction is direct and promotes recruitment of the CCR4-NOT complex. Interacts with YTHDF3. Interacts with RIDA/HRSP12; interaction leads to recruitment of the ribonuclease P/MRP complex. In terms of processing, ubiquitinated by the SCF(SKP2) complex, leading to its degradation.

The protein resides in the cytoplasm. It is found in the cytosol. The protein localises to the P-body. Its subcellular location is the stress granule. It localises to the nucleus. Specifically recognizes and binds N6-methyladenosine (m6A)-containing RNAs, and regulates their stability. M6A is a modification present at internal sites of mRNAs and some non-coding RNAs and plays a role in mRNA stability and processing. Acts as a regulator of mRNA stability by promoting degradation of m6A-containing mRNAs via interaction with the CCR4-NOT and ribonuclease P/MRP complexes, depending on the context. The YTHDF paralogs (YTHDF1, YTHDF2 and YTHDF3) share m6A-containing mRNAs targets and act redundantly to mediate mRNA degradation and cellular differentiation. M6A-containing mRNAs containing a binding site for RIDA/HRSP12 (5'-GGUUC-3') are preferentially degraded by endoribonucleolytic cleavage: cooperative binding of RIDA/HRSP12 and YTHDF2 to transcripts leads to recruitment of the ribonuclease P/MRP complex. Other m6A-containing mRNAs undergo deadenylation via direct interaction between YTHDF2 and CNOT1, leading to recruitment of the CCR4-NOT and subsequent deadenylation of m6A-containing mRNAs. Required maternally to regulate oocyte maturation: probably acts by binding to m6A-containing mRNAs, thereby regulating maternal transcript dosage during oocyte maturation, which is essential for the competence of oocytes to sustain early zygotic development. Also required during spermatogenesis: regulates spermagonial adhesion by promoting degradation of m6A-containing transcripts coding for matrix metallopeptidases. Also involved in hematopoietic stem cells specification by binding to m6A-containing mRNAs, leading to promote their degradation. Also acts as a regulator of neural development by promoting m6A-dependent degradation of neural development-related mRNA targets. Inhibits neural specification of induced pluripotent stem cells by binding to methylated neural-specific mRNAs and promoting their degradation, thereby restraining neural differentiation. Regulates circadian regulation of hepatic lipid metabolism: acts by promoting m6A-dependent degradation of PPARA transcripts. Regulates the innate immune response to infection by inhibiting the type I interferon response: acts by binding to m6A-containing IFNB transcripts and promoting their degradation. May also act as a promoter of cap-independent mRNA translation following heat shock stress: upon stress, relocalizes to the nucleus and specifically binds mRNAs with some m6A methylation mark at their 5'-UTR, protecting demethylation of mRNAs by FTO, thereby promoting cap-independent mRNA translation. Regulates mitotic entry by promoting the phase-specific m6A-dependent degradation of WEE1 transcripts. Promotes formation of phase-separated membraneless compartments, such as P-bodies or stress granules, by undergoing liquid-liquid phase separation upon binding to mRNAs containing multiple m6A-modified residues: polymethylated mRNAs act as a multivalent scaffold for the binding of YTHDF proteins, juxtaposing their disordered regions and thereby leading to phase separation. The resulting mRNA-YTHDF complexes then partition into different endogenous phase-separated membraneless compartments, such as P-bodies, stress granules or neuronal RNA granules. May also recognize and bind RNAs modified by C5-methylcytosine (m5C) and act as a regulator of rRNA processing. The polypeptide is YTH domain-containing family protein 2 (Bos taurus (Bovine)).